Here is a 266-residue protein sequence, read N- to C-terminus: Uracil-DNA glycosylase (266 aa).

Residues 1 to 25 are disordered; sequence MTRRADPAQATLFDDDEPAGAPTAT. D97 functions as the Proton acceptor in the catalytic mechanism.

Belongs to the uracil-DNA glycosylase (UDG) superfamily. UNG family.

The protein localises to the cytoplasm. It carries out the reaction Hydrolyzes single-stranded DNA or mismatched double-stranded DNA and polynucleotides, releasing free uracil.. Its function is as follows. Excises uracil residues from the DNA which can arise as a result of misincorporation of dUMP residues by DNA polymerase or due to deamination of cytosine. This chain is Uracil-DNA glycosylase, found in Ralstonia nicotianae (strain ATCC BAA-1114 / GMI1000) (Ralstonia solanacearum).